The sequence spans 235 residues: Cytidylate kinase (235 aa).

11 to 19 (GPSGVGKST) serves as a coordination point for ATP.

It belongs to the cytidylate kinase family. Type 1 subfamily.

The protein resides in the cytoplasm. The enzyme catalyses CMP + ATP = CDP + ADP. It carries out the reaction dCMP + ATP = dCDP + ADP. The sequence is that of Cytidylate kinase from Syntrophotalea carbinolica (strain DSM 2380 / NBRC 103641 / GraBd1) (Pelobacter carbinolicus).